The sequence spans 328 residues: Leucine carboxyl methyltransferase 1 (328 aa).

S-adenosyl-L-methionine-binding positions include R81, G105, D128, 175-177, and E201; that span reads DLN.

It belongs to the methyltransferase superfamily. LCMT family.

It carries out the reaction [phosphatase 2A protein]-C-terminal L-leucine + S-adenosyl-L-methionine = [phosphatase 2A protein]-C-terminal L-leucine methyl ester + S-adenosyl-L-homocysteine. Inhibited by S-adenosyl-L-homocysteine. Methylates the carboxyl group of the C-terminal leucine residue of protein phosphatase 2A catalytic subunits to form alpha-leucine ester residues. Acts on the two major protein phosphatase 2A catalytic subunits, PPH21 and PPH22. This Saccharomyces cerevisiae (strain ATCC 204508 / S288c) (Baker's yeast) protein is Leucine carboxyl methyltransferase 1 (PPM1).